Here is a 657-residue protein sequence, read N- to C-terminus: Glycogen debranching enzyme (657 aa).

Asp336 functions as the Nucleophile in the catalytic mechanism. Residue Glu371 is the Proton donor of the active site. The span at 458–467 shows a compositional bias: basic and acidic residues; it reads NEANGEENRD. The segment at 458–479 is disordered; that stretch reads NEANGEENRDGTNNNYSNNHGK.

It belongs to the glycosyl hydrolase 13 family.

The catalysed reaction is Hydrolysis of (1-&gt;6)-alpha-D-glucosidic linkages to branches with degrees of polymerization of three or four glucose residues in limit dextrin.. Its pathway is glycan degradation; glycogen degradation. Its function is as follows. Removes maltotriose and maltotetraose chains that are attached by 1,6-alpha-linkage to the limit dextrin main chain, generating a debranched limit dextrin. The sequence is that of Glycogen debranching enzyme from Escherichia coli (strain K12 / DH10B).